The following is a 90-amino-acid chain: UPF0213 protein lwe0147 (90 aa).

Residues 5 to 83 (NEHFFYVLKC…SRKNKDSYLI (79 aa)) form the GIY-YIG domain.

Belongs to the UPF0213 family.

The sequence is that of UPF0213 protein lwe0147 from Listeria welshimeri serovar 6b (strain ATCC 35897 / DSM 20650 / CCUG 15529 / CIP 8149 / NCTC 11857 / SLCC 5334 / V8).